Reading from the N-terminus, the 235-residue chain is Uridylate kinase (235 aa).

ATP is bound at residue 9–12 (KLSG). The involved in allosteric activation by GTP stretch occupies residues 17–22 (GNQGYG). Glycine 51 serves as a coordination point for UMP. Residues glycine 52 and arginine 56 each coordinate ATP. UMP contacts are provided by residues aspartate 71 and 132–139 (CGNPFFTT). Threonine 159, tyrosine 165, and aspartate 168 together coordinate ATP.

The protein belongs to the UMP kinase family. As to quaternary structure, homohexamer.

It localises to the cytoplasm. The catalysed reaction is UMP + ATP = UDP + ADP. Its pathway is pyrimidine metabolism; CTP biosynthesis via de novo pathway; UDP from UMP (UMPK route): step 1/1. Allosterically activated by GTP. Inhibited by UTP. Functionally, catalyzes the reversible phosphorylation of UMP to UDP. This is Uridylate kinase from Synechococcus sp. (strain CC9311).